The chain runs to 252 residues: MRFGVITLFPGMFDALWDSGVVGRALKQGKISLNFWNPRDFAHDRHRTVDARPYGGGPGMVMGIQPLRDAIHVGRAELGKGCRVLYLSPQGRRLDQAGLEALASNESLLFVAGRYEGVDERLIEMEVDEEWSIGDYVLSGGELAAMVIIDGLARLLPGVLGAAESAQQDSFVNGLLDCPHYTRPEVIEGYRVPPVLLSGDHKAIRRWRLKQALGRTWLKRPDLLSRRILDLEQQHLLAEFIREYQAEHREPR.

Residues Gly-113 and 133–138 (IGDYVL) each bind S-adenosyl-L-methionine.

Belongs to the RNA methyltransferase TrmD family. As to quaternary structure, homodimer.

It is found in the cytoplasm. The enzyme catalyses guanosine(37) in tRNA + S-adenosyl-L-methionine = N(1)-methylguanosine(37) in tRNA + S-adenosyl-L-homocysteine + H(+). Its function is as follows. Specifically methylates guanosine-37 in various tRNAs. The polypeptide is tRNA (guanine-N(1)-)-methyltransferase (Nitrosococcus oceani (strain ATCC 19707 / BCRC 17464 / JCM 30415 / NCIMB 11848 / C-107)).